The following is a 308-amino-acid chain: Acetaldehyde dehydrogenase (308 aa).

Threonine 14–isoleucine 17 contacts NAD(+). The active-site Acyl-thioester intermediate is the cysteine 129. NAD(+) contacts are provided by residues serine 160–asparagine 168 and asparagine 280.

It belongs to the acetaldehyde dehydrogenase family.

It carries out the reaction acetaldehyde + NAD(+) + CoA = acetyl-CoA + NADH + H(+). The polypeptide is Acetaldehyde dehydrogenase (Thermomicrobium roseum (strain ATCC 27502 / DSM 5159 / P-2)).